We begin with the raw amino-acid sequence, 488 residues long: Homoserine O-acetyltransferase (488 aa).

Residues 47 to 355 enclose the AB hydrolase-1 domain; the sequence is NAILVCHALT…SYGHDAFLLE (309 aa). S153 (nucleophile) is an active-site residue. R222 is a substrate binding site. Residues D316 and H349 contribute to the active site. D350 is a substrate binding site. 2 consecutive CBS domains span residues 376 to 433 and 437 to 488; these read MTEK…CSKL and MTRD…RLIG.

The protein belongs to the AB hydrolase superfamily. MetX family. As to quaternary structure, homodimer.

The protein resides in the cytoplasm. It catalyses the reaction L-homoserine + acetyl-CoA = O-acetyl-L-homoserine + CoA. Its pathway is amino-acid biosynthesis; L-methionine biosynthesis via de novo pathway; O-acetyl-L-homoserine from L-homoserine: step 1/1. Transfers an acetyl group from acetyl-CoA to L-homoserine, forming acetyl-L-homoserine. The sequence is that of Homoserine O-acetyltransferase from Methanococcoides burtonii (strain DSM 6242 / NBRC 107633 / OCM 468 / ACE-M).